A 184-amino-acid chain; its full sequence is ATP synthase subunit b, chloroplastic (184 aa).

A helical transmembrane segment spans residues 31–49; it reads IINPSVVLSVLIYFGKGVL.

This sequence belongs to the ATPase B chain family. F-type ATPases have 2 components, F(1) - the catalytic core - and F(0) - the membrane proton channel. F(1) has five subunits: alpha(3), beta(3), gamma(1), delta(1), epsilon(1). F(0) has four main subunits: a(1), b(1), b'(1) and c(10-14). The alpha and beta chains form an alternating ring which encloses part of the gamma chain. F(1) is attached to F(0) by a central stalk formed by the gamma and epsilon chains, while a peripheral stalk is formed by the delta, b and b' chains.

It localises to the plastid. The protein localises to the chloroplast thylakoid membrane. Its function is as follows. F(1)F(0) ATP synthase produces ATP from ADP in the presence of a proton or sodium gradient. F-type ATPases consist of two structural domains, F(1) containing the extramembraneous catalytic core and F(0) containing the membrane proton channel, linked together by a central stalk and a peripheral stalk. During catalysis, ATP synthesis in the catalytic domain of F(1) is coupled via a rotary mechanism of the central stalk subunits to proton translocation. Component of the F(0) channel, it forms part of the peripheral stalk, linking F(1) to F(0). The chain is ATP synthase subunit b, chloroplastic from Pinus koraiensis (Korean pine).